A 711-amino-acid polypeptide reads, in one-letter code: Protein mono-ADP-ribosyltransferase PARP12 (711 aa).

3 consecutive C3H1-type zinc fingers follow at residues 103–128 (LCKFLIYGNCKFLKTGKNCRNGHNLK), 164–188 (ICLHYNKGDGPFGSCSFQKQCIKLH), and 189–211 (ICQYFLQGECKFGTSCKRSHEFT). Positions 247–279 (SALSKVSPSPAGPQGSSERKDSSGPVSPGTPSQ) are disordered. Ser-268 carries the phosphoserine modification. 2 C3H1-type zinc fingers span residues 280–307 (EESEQICLYHIRKSCSFQEKCHRVHFHL) and 281–306 (ESEQICLYHIRKSCSFQEKCHRVHFH). 2 WWE domains span residues 308–371 (PYRW…RLST) and 374–468 (SVTK…KVCR). Cys-484 carries the ADP-ribosylcysteine modification. One can recognise a PARP catalytic domain in the interval 494 to 708 (IPDYWDPAAL…IFVALGNLFT (215 aa)). Asp-610 and Asp-621 each carry ADP-ribosyl aspartic acid.

It belongs to the ARTD/PARP family. In terms of assembly, interacts with PARP11; this interaction plays a key role in zika virus suppression. Interacts with ISG15. Auto-mono-ADP-ribosylated. Post-translationally, phosphorylated by PRKD1.

The protein localises to the nucleus. Its subcellular location is the golgi apparatus. It localises to the trans-Golgi network. It is found in the cytoplasm. The protein resides in the stress granule. It carries out the reaction L-aspartyl-[protein] + NAD(+) = 4-O-(ADP-D-ribosyl)-L-aspartyl-[protein] + nicotinamide. It catalyses the reaction L-cysteinyl-[protein] + NAD(+) = S-(ADP-D-ribosyl)-L-cysteinyl-[protein] + nicotinamide + H(+). Its function is as follows. Mono-ADP-ribosyltransferase that mediates mono-ADP-ribosylation of target proteins. Displays anti-alphavirus activity during IFN-gamma immune activation by directly ADP-ribosylating the alphaviral non-structural proteins nsP3 and nsP4. Acts as a component of the PRKD1-driven regulatory cascade that selectively controls a major branch of the basolateral transport pathway by catalyzing the MARylation of GOLGA1. Acts also as a key regulator of mitochondrial function, protein translation, and inflammation. Inhibits PINK1/Parkin-dependent mitophagy and promotes cartilage degeneration by inhibiting the ubiquitination and SUMOylation of MFN1/2 by upregulating ISG15 and ISGylation. This chain is Protein mono-ADP-ribosyltransferase PARP12, found in Mus musculus (Mouse).